The following is a 437-amino-acid chain: Beta-1,3-galactosyl-O-glycosyl-glycoprotein beta-1,6-N-acetylglucosaminyltransferase 3 (437 aa).

At 1-6 the chain is on the cytoplasmic side; it reads MVSWRR. A helical; Signal-anchor for type II membrane protein membrane pass occupies residues 7–27; the sequence is FCWHYHGWTLGCYMLLAIIAL. Over 28–437 the chain is Lumenal; that stretch reads KLSLRLKCDF…RHKAIYGTEL (410 aa). 4 disulfides stabilise this stretch: cysteine 70–cysteine 227, cysteine 161–cysteine 381, cysteine 182–cysteine 209, and cysteine 390–cysteine 422. Asparagine 288 carries an N-linked (GlcNAc...) asparagine glycan.

It belongs to the glycosyltransferase 14 family. In terms of processing, N-glycosylated.

The protein resides in the golgi apparatus membrane. The catalysed reaction is a 3-O-[beta-D-galactosyl-(1-&gt;3)-N-acetyl-alpha-D-galactosaminyl]-L-seryl-[protein] + UDP-N-acetyl-alpha-D-glucosamine = 3-O-{beta-D-galactosyl-(1-&gt;3)-[N-acetyl-beta-D-glucosaminyl-(1-&gt;6)]-N-acetyl-alpha-D-galactosaminyl}-L-seryl-[protein] + UDP + H(+). It catalyses the reaction a 3-O-[beta-D-galactosyl-(1-&gt;3)-N-acetyl-alpha-D-galactosaminyl]-L-threonyl-[protein] + UDP-N-acetyl-alpha-D-glucosamine = a 3-O-{beta-D-galactosyl-(1-&gt;3)-[N-acetyl-beta-D-glucosaminyl-(1-&gt;6)]-N-acetyl-alpha-D-galactosaminyl}-L-threonyl-[protein] + UDP + H(+). The enzyme catalyses a beta-D-Gal-(1-&gt;4)-beta-D-GlcNAc-(1-&gt;3)-beta-D-Gal-(1-&gt;4)-beta-D-GlcNAc derivative + UDP-N-acetyl-alpha-D-glucosamine = a beta-D-Gal-(1-&gt;4)-beta-D-GlcNAc-(1-&gt;3)-[beta-D-GlcNAc-(1-&gt;6)]-beta-D-Gal-(1-&gt;4)-N-acetyl-beta-D-glucosaminyl derivative + UDP + H(+). It carries out the reaction 3-O-[N-acetyl-beta-D-glucosaminyl-(1-&gt;3)-N-acetyl-alpha-D-galactosaminyl]-L-seryl-[protein] + UDP-N-acetyl-alpha-D-glucosamine = 3-O-[N-acetyl-beta-D-glucosaminyl-(1-&gt;3)-[N-acetyl-beta-D-glucosaminyl-(1-&gt;6)]-N-acetyl-alpha-D-galactosaminyl]-L-seryl-[protein] + UDP + H(+). The catalysed reaction is a 3-O-[N-acetyl-beta-D-glucosaminyl-(1-&gt;3)-N-acetyl-alpha-D-galactosaminyl]-L-threonyl-[protein] + UDP-N-acetyl-alpha-D-glucosamine = 3-O-[N-acetyl-beta-D-glucosaminyl-(1-&gt;3)-[N-acetyl-beta-D-glucosaminyl-(1-&gt;6)]-N-acetyl-alpha-D-galactosaminyl]-L-threonyl-[protein] + UDP + H(+). The protein operates within protein modification; protein glycosylation. Glycosyltransferase that can synthesize all known mucin beta 6 N-acetylglucosaminides. Mediates core 2 and core 4 O-glycan branching, 2 important steps in mucin-type biosynthesis. Also has I-branching enzyme activity by converting linear into branched poly-N-acetyllactosaminoglycans, leading to introduce the blood group I antigen during embryonic development. The sequence is that of Beta-1,3-galactosyl-O-glycosyl-glycoprotein beta-1,6-N-acetylglucosaminyltransferase 3 (Gcnt3) from Rattus norvegicus (Rat).